Consider the following 287-residue polypeptide: 4-hydroxybenzoate octaprenyltransferase (287 aa).

9 helical membrane-spanning segments follow: residues 21–41 (VGIF…AKGA), 44–64 (FKIA…GCIV), 91–111 (VTEA…LVLL), 112–132 (LNRL…VYPF), 139–159 (LPQL…FAAT), 160–180 (VGHV…WPIV), 211–231 (LMIG…GWYL), 235–255 (YWFY…QFLI), and 263–283 (CFAA…GILL).

This sequence belongs to the UbiA prenyltransferase family. Requires Mg(2+) as cofactor.

Its subcellular location is the cell inner membrane. It carries out the reaction all-trans-octaprenyl diphosphate + 4-hydroxybenzoate = 4-hydroxy-3-(all-trans-octaprenyl)benzoate + diphosphate. It participates in cofactor biosynthesis; ubiquinone biosynthesis. In terms of biological role, catalyzes the prenylation of para-hydroxybenzoate (PHB) with an all-trans polyprenyl group. Mediates the second step in the final reaction sequence of ubiquinone-8 (UQ-8) biosynthesis, which is the condensation of the polyisoprenoid side chain with PHB, generating the first membrane-bound Q intermediate 3-octaprenyl-4-hydroxybenzoate. This Coxiella burnetii (strain CbuK_Q154) (Coxiella burnetii (strain Q154)) protein is 4-hydroxybenzoate octaprenyltransferase.